A 1050-amino-acid chain; its full sequence is DNA polymerase I A, chloroplastic/mitochondrial (1050 aa).

The N-terminal 91 residues, 1–91 (MAMGVSLTSH…VVFNGEWELR (91 aa)), are a transit peptide targeting the chloroplast and mitochondrion. The interval 202-240 (PRKGLDVGDNMDVNPKGEGIQRPLISDKSSGTANGNKNT) is disordered. The segment covering 228–240 (DKSSGTANGNKNT) has biased composition (polar residues). In terms of domain architecture, 3'-5' exonuclease spans 312–490 (ELICFSIYCG…LYESMTKKLQ (179 aa)). The disordered stretch occupies residues 673 to 694 (VVEDDDVETSETQKSKTDDETD). Residues 717 to 1048 (AIASLCEVCS…DAKCAQNWYA (332 aa)) form a polymerase region.

Belongs to the DNA polymerase type-A family. As to expression, expressed in shoot apical meristem.

The protein resides in the plastid. The protein localises to the chloroplast. Its subcellular location is the mitochondrion. It catalyses the reaction DNA(n) + a 2'-deoxyribonucleoside 5'-triphosphate = DNA(n+1) + diphosphate. Its activity is regulated as follows. Not inhibited by aphidicolin. In addition to polymerase activity, this DNA polymerase exhibits 5'-3' exonuclease activity. Required for DNA replication and accumulation in plastids and mitochondria. May be required for DNA repair in both organelles. The sequence is that of DNA polymerase I A, chloroplastic/mitochondrial (POLIA) from Arabidopsis thaliana (Mouse-ear cress).